Consider the following 242-residue polypeptide: Uridylate kinase (242 aa).

17 to 20 (KLGG) serves as a coordination point for ATP. G58 is a binding site for UMP. ATP is bound by residues G59 and R63. Residues D78 and 139–146 (MGMPYFST) contribute to the UMP site. Residues F172 and D175 each coordinate ATP.

It belongs to the UMP kinase family. In terms of assembly, homohexamer.

The protein localises to the cytoplasm. It carries out the reaction UMP + ATP = UDP + ADP. It participates in pyrimidine metabolism; CTP biosynthesis via de novo pathway; UDP from UMP (UMPK route): step 1/1. With respect to regulation, inhibited by UTP. Its function is as follows. Catalyzes the reversible phosphorylation of UMP to UDP. The sequence is that of Uridylate kinase from Rhodococcus jostii (strain RHA1).